The primary structure comprises 474 residues: P2X purinoceptor 2 (474 aa).

The Cytoplasmic portion of the chain corresponds to Met1–Arg42. The chain crosses the membrane as a helical span at residues Ala43–Gln60. Over Lys61 to Ser333 the chain is Extracellular. Lys77 and Lys79 together coordinate ATP. Cystine bridges form between Cys121-Cys172, Cys132-Cys155, and Cys138-Cys166. Asn129 carries an N-linked (GlcNAc...) asparagine glycan. Asn190 carries N-linked (GlcNAc...) asparagine glycosylation. Thr192 lines the ATP pocket. Cys222 and Cys232 form a disulfide bridge. N-linked (GlcNAc...) asparagine glycosylation occurs at Asn247. An intrachain disulfide couples Cys266 to Cys275. Residues Ser292, Asn296, and Arg298 each contribute to the ATP site. Asn306 carries an N-linked (GlcNAc...) asparagine glycan. Lys315 is a binding site for ATP. Residues Ala316 to Ala329 are pore-forming motif. A helical membrane pass occupies residues Leu334 to Leu354. Residues Cys355–Leu474 lie on the Cytoplasmic side of the membrane. Residues Pro445 to Leu474 are disordered. Over residues Leu453–Thr466 the composition is skewed to polar residues.

This sequence belongs to the P2X receptor family. In terms of assembly, homotrimer and heterotrimer; functional P2XRs are organized as homomeric and heteromeric trimers. Homotrimer. Forms heterodimer with P2RX1. Forms heterotrimer with P2RX6. Forms heterotrimer with P2RX3. Express in organ of Corti.

The protein localises to the cell membrane. The catalysed reaction is Ca(2+)(in) = Ca(2+)(out). It catalyses the reaction K(+)(in) = K(+)(out). The enzyme catalyses Na(+)(in) = Na(+)(out). Fast activation by external ATP. Exhibits slow desensitization during prolonged ATP activation. Not sensitive to the ATP agonist:alpha/beta-methylene-ATP. ATP-gated nonselective transmembrane cation channel permeable to potassium, sodium and calcium. Activation by extracellular ATP induces a variety of cellular responses, such as excitatory postsynaptic responses in sensory neurons, neuromuscular junctions (NMJ) formation, hearing, perception of taste and peristalsis. In the inner ear, regulates sound transduction and auditory neurotransmission, outer hair cell electromotility, inner ear gap junctions, and K(+) recycling. Mediates synaptic transmission between neurons and from neurons to smooth muscle. The chain is P2X purinoceptor 2 (P2RX2) from Cavia porcellus (Guinea pig).